The sequence spans 181 residues: Adenine phosphoribosyltransferase 2 (181 aa).

The residue at position 2 (S2) is an N-acetylserine.

It belongs to the purine/pyrimidine phosphoribosyltransferase family.

It localises to the cytoplasm. It carries out the reaction AMP + diphosphate = 5-phospho-alpha-D-ribose 1-diphosphate + adenine. It participates in purine metabolism; AMP biosynthesis via salvage pathway; AMP from adenine: step 1/1. Functionally, catalyzes a salvage reaction resulting in the formation of AMP, that is energically less costly than de novo synthesis. May lack catalytic activity. In Saccharomyces cerevisiae (strain ATCC 204508 / S288c) (Baker's yeast), this protein is Adenine phosphoribosyltransferase 2 (APT2).